The primary structure comprises 617 residues: Dihydroxy-acid dehydratase (617 aa).

Asp-81 contacts Mg(2+). Cys-122 serves as a coordination point for [2Fe-2S] cluster. The Mg(2+) site is built by Asp-123 and Lys-124. Lys-124 bears the N6-carboxylysine mark. Cys-195 serves as a coordination point for [2Fe-2S] cluster. Glu-491 lines the Mg(2+) pocket. Ser-517 acts as the Proton acceptor in catalysis.

Belongs to the IlvD/Edd family. In terms of assembly, homodimer. It depends on [2Fe-2S] cluster as a cofactor. Requires Mg(2+) as cofactor.

The enzyme catalyses (2R)-2,3-dihydroxy-3-methylbutanoate = 3-methyl-2-oxobutanoate + H2O. It catalyses the reaction (2R,3R)-2,3-dihydroxy-3-methylpentanoate = (S)-3-methyl-2-oxopentanoate + H2O. It participates in amino-acid biosynthesis; L-isoleucine biosynthesis; L-isoleucine from 2-oxobutanoate: step 3/4. Its pathway is amino-acid biosynthesis; L-valine biosynthesis; L-valine from pyruvate: step 3/4. In terms of biological role, functions in the biosynthesis of branched-chain amino acids. Catalyzes the dehydration of (2R,3R)-2,3-dihydroxy-3-methylpentanoate (2,3-dihydroxy-3-methylvalerate) into 2-oxo-3-methylpentanoate (2-oxo-3-methylvalerate) and of (2R)-2,3-dihydroxy-3-methylbutanoate (2,3-dihydroxyisovalerate) into 2-oxo-3-methylbutanoate (2-oxoisovalerate), the penultimate precursor to L-isoleucine and L-valine, respectively. This is Dihydroxy-acid dehydratase from Buchnera aphidicola subsp. Diuraphis noxia.